The sequence spans 915 residues: Coronin-7 (915 aa).

4 WD repeats span residues 75 to 115 (CHSD…QALP), 124 to 163 (PEDA…PLTE), 166 to 205 (THGD…EAAQ), and 209 to 253 (AHEN…AALT). The tract at residues 396 to 456 (TSCLAPPAEL…TSPSQRSLQS (61 aa)) is disordered. Low complexity-rich tracts occupy residues 399 to 413 (LAPP…AQPA) and 420 to 450 (SSTP…TSPS). Phosphoserine occurs at positions 453 and 456. A Glycyl lysine isopeptide (Lys-Gly) (interchain with G-Cter in ubiquitin) cross-link involves residue K463. WD repeat units follow at residues 533 to 573 (QNGV…LQEV), 583 to 623 (GHTE…EQLR), 626 to 665 (GHRD…EPLQ), and 719 to 759 (DVAP…PFFL). The tract at residues 850–915 (PPGMTPVSQA…FEGVDEDEWD (66 aa)) is disordered. The span at 859–869 (APREAPARRAP) shows a compositional bias: low complexity. Over residues 874 to 886 (LEEKSDQQKKEEL) the composition is skewed to basic and acidic residues. S905 bears the Phosphoserine mark.

This sequence belongs to the WD repeat coronin family. As to quaternary structure, interacts with clathrin adapter AP1 complex. This interaction takes place at Golgi membranes and not AP1-positive endosomal membranes. Interacts (when ubiquitinated at Lys-463) with EPS15. In terms of processing, the membrane-associated form is phosphorylated on tyrosine residues. Ubiquitinated via 'Lys-33'-linked ubiquitin chains by the BCR(KLHL20) E3 ubiquitin ligase complex: 'Lys-33'-linked ubiquitination promotes interaction with EPS15 and facilitates actin polymerization at the trans-Golgi network, thereby facilitating post-Golgi trafficking. Deubiquitinated by ZRANB1/TRABID.

The protein resides in the golgi apparatus membrane. The protein localises to the golgi apparatus. It is found in the trans-Golgi network. It localises to the cytoplasmic vesicle. Its subcellular location is the cytoplasm. The protein resides in the cytosol. In terms of biological role, F-actin regulator involved in anterograde Golgi to endosome transport: upon ubiquitination via 'Lys-33'-linked ubiquitin chains by the BCR(KLHL20) E3 ubiquitin ligase complex, interacts with EPS15 and localizes to the trans-Golgi network, where it promotes actin polymerization, thereby facilitating post-Golgi trafficking. May play a role in the maintenance of the Golgi apparatus morphology. The protein is Coronin-7 (CORO7) of Bos taurus (Bovine).